A 438-amino-acid chain; its full sequence is tRNA(Ile)-lysidine synthase (438 aa).

Position 19–24 (19–24) interacts with ATP; that stretch reads SGGIDS.

This sequence belongs to the tRNA(Ile)-lysidine synthase family.

The protein localises to the cytoplasm. It catalyses the reaction cytidine(34) in tRNA(Ile2) + L-lysine + ATP = lysidine(34) in tRNA(Ile2) + AMP + diphosphate + H(+). Ligates lysine onto the cytidine present at position 34 of the AUA codon-specific tRNA(Ile) that contains the anticodon CAU, in an ATP-dependent manner. Cytidine is converted to lysidine, thus changing the amino acid specificity of the tRNA from methionine to isoleucine. In Buchnera aphidicola subsp. Baizongia pistaciae (strain Bp), this protein is tRNA(Ile)-lysidine synthase.